We begin with the raw amino-acid sequence, 169 residues long: uncharacterized protein (169 aa).

The Nudix hydrolase domain maps to 28 to 157 (ELHLVIHVCI…EFIPYFFLNQ (130 aa)). Residues 65–87 (AGSALKGETSQQAAEREVQEELG) carry the Nudix box motif. The Mg(2+) site is built by E81 and E85.

It belongs to the Nudix hydrolase family. The cofactor is Mg(2+).

This is an uncharacterized protein from Listeria monocytogenes serovar 1/2a (strain ATCC BAA-679 / EGD-e).